The chain runs to 357 residues: RNA 3'-terminal phosphate cyclase (357 aa).

ATP is bound by residues Gln-102 and 293–296; that span reads HMGD. His-319 acts as the Tele-AMP-histidine intermediate in catalysis.

This sequence belongs to the RNA 3'-terminal cyclase family. Type 1 subfamily.

The protein localises to the cytoplasm. The catalysed reaction is a 3'-end 3'-phospho-ribonucleotide-RNA + ATP = a 3'-end 2',3'-cyclophospho-ribonucleotide-RNA + AMP + diphosphate. In terms of biological role, catalyzes the conversion of 3'-phosphate to a 2',3'-cyclic phosphodiester at the end of RNA. The mechanism of action of the enzyme occurs in 3 steps: (A) adenylation of the enzyme by ATP; (B) transfer of adenylate to an RNA-N3'P to produce RNA-N3'PP5'A; (C) and attack of the adjacent 2'-hydroxyl on the 3'-phosphorus in the diester linkage to produce the cyclic end product. The biological role of this enzyme is unknown but it is likely to function in some aspects of cellular RNA processing. This Staphylothermus marinus (strain ATCC 43588 / DSM 3639 / JCM 9404 / F1) protein is RNA 3'-terminal phosphate cyclase.